The sequence spans 174 residues: Small ribosomal subunit protein uS5c (174 aa).

Residues 17–80 enclose the S5 DRBM domain; that stretch reads WEERVVQVKR…TDAKKHLVTV (64 aa).

This sequence belongs to the universal ribosomal protein uS5 family. In terms of assembly, part of the 30S ribosomal subunit. Contacts protein S4.

The protein resides in the plastid. It localises to the chloroplast. In terms of biological role, with S4 and S12 plays an important role in translational accuracy. The polypeptide is Small ribosomal subunit protein uS5c (rps5) (Pyropia yezoensis (Susabi-nori)).